The sequence spans 235 residues: RING-H2 finger protein ATL17 (235 aa).

Residues M1–Y21 traverse the membrane as a helical segment. The RING-type; atypical zinc finger occupies C76–R118. The disordered stretch occupies residues V143–K167.

This sequence belongs to the RING-type zinc finger family. ATL subfamily.

The protein resides in the membrane. The catalysed reaction is S-ubiquitinyl-[E2 ubiquitin-conjugating enzyme]-L-cysteine + [acceptor protein]-L-lysine = [E2 ubiquitin-conjugating enzyme]-L-cysteine + N(6)-ubiquitinyl-[acceptor protein]-L-lysine.. It functions in the pathway protein modification; protein ubiquitination. Its function is as follows. May be involved in the early steps of the plant defense signaling pathway. The protein is RING-H2 finger protein ATL17 (ATL17) of Arabidopsis thaliana (Mouse-ear cress).